The chain runs to 318 residues: Petal death protein (318 aa).

A propeptide spans 1 to 3 (removed in mature form); the sequence is MAP. The tract at residues 1–24 is disordered; sequence MAPPNGTTNGETEVATQGSYTAVS. Residues D107, D109, and K142 each coordinate Mg(2+).

This sequence belongs to the isocitrate lyase/PEP mutase superfamily. Homodimer and homotetramer formed by a dimer of homodimer. The cofactor is Mg(2+). Requires Mn(2+) as cofactor. Fe(2+) serves as cofactor. It depends on Co(2+) as a cofactor. In terms of tissue distribution, accumulates in senescing flower petals.

The enzyme catalyses oxaloacetate + H2O = oxalate + acetate + H(+). Functionally, catalyzes cleavage of the C(2)-C(3) bond in oxaloacetate and in (2R)-alkyl malate derivatives to form oxalate and acetate, and alkyl carboxylates and R-ketocarboxylates, respectively. The polypeptide is Petal death protein (Dianthus caryophyllus (Carnation)).